The chain runs to 147 residues: MQNNEIQPSFLIQKVYTKDVSFETINSPACFKEQWNPSSDFNIDINTTKINDENFELDLTITVTTKNNETNAYIAEVTQSGIFTITSMSEEQIDSVLNTYCANTLFPYAKRIIDSSIIKGGFLPLNLAPINFDAIYLQKKSSPKREH.

The protein belongs to the SecB family. As to quaternary structure, homotetramer, a dimer of dimers. One homotetramer interacts with 1 SecA dimer.

The protein localises to the cytoplasm. In terms of biological role, one of the proteins required for the normal export of preproteins out of the cell cytoplasm. It is a molecular chaperone that binds to a subset of precursor proteins, maintaining them in a translocation-competent state. It also specifically binds to its receptor SecA. The polypeptide is Protein-export protein SecB 2 (Francisella tularensis subsp. holarctica (strain FTNF002-00 / FTA)).